We begin with the raw amino-acid sequence, 78 residues long: Large ribosomal subunit protein uL29 (78 aa).

The protein belongs to the universal ribosomal protein uL29 family.

In Rippkaea orientalis (strain PCC 8801 / RF-1) (Cyanothece sp. (strain PCC 8801)), this protein is Large ribosomal subunit protein uL29.